Reading from the N-terminus, the 191-residue chain is Elongation factor P (191 aa).

Belongs to the elongation factor P family.

The protein resides in the cytoplasm. It participates in protein biosynthesis; polypeptide chain elongation. Its function is as follows. Involved in peptide bond synthesis. Stimulates efficient translation and peptide-bond synthesis on native or reconstituted 70S ribosomes in vitro. Probably functions indirectly by altering the affinity of the ribosome for aminoacyl-tRNA, thus increasing their reactivity as acceptors for peptidyl transferase. The polypeptide is Elongation factor P (Bartonella henselae (strain ATCC 49882 / DSM 28221 / CCUG 30454 / Houston 1) (Rochalimaea henselae)).